We begin with the raw amino-acid sequence, 283 residues long: Cyclin-C (283 aa).

Residues 46–144 (NVIQALGEHL…ILECEFYLLE (99 aa)) enclose the Cyclin N-terminal domain. Positions 252 to 283 (SILSKMPKPKPPPNSDGEQGTNGSQSSGYSQS) are disordered. The span at 267-283 (DGEQGTNGSQSSGYSQS) shows a compositional bias: polar residues.

It belongs to the cyclin family. Cyclin C subfamily. In terms of assembly, component of the Mediator complex. The cylin/CDK pair formed by ccnc/cdk8 also associates with the large subunit of RNA polymerase II.

It localises to the nucleus. Component of the Mediator complex, a coactivator involved in regulated gene transcription of nearly all RNA polymerase II-dependent genes. Mediator functions as a bridge to convey information from gene-specific regulatory proteins to the basal RNA polymerase II transcription machinery. Mediator is recruited to promoters by direct interactions with regulatory proteins and serves as a scaffold for the assembly of a functional preinitiation complex with RNA polymerase II and the general transcription factors. Binds to and activates cyclin-dependent kinase cdk8 that phosphorylates the CTD (C-terminal domain) of the large subunit of RNA polymerase II (RNAp II), which may inhibit the formation of a transcription initiation complex. The sequence is that of Cyclin-C (ccnc) from Xenopus laevis (African clawed frog).